A 110-amino-acid polypeptide reads, in one-letter code: Protein P2 (110 aa).

Residues 72–82 show a composition bias toward polar residues; sequence KLPTTSGSSSA. The disordered stretch occupies residues 72–110; sequence KLPTTSGSSSAGAIVPAGSNTQGQYKAPPKKGIKRKYPA. The span at 99–110 shows a compositional bias: basic residues; that stretch reads PPKKGIKRKYPA.

This is Protein P2 from Oryza sativa (Rice).